We begin with the raw amino-acid sequence, 292 residues long: Early E4 34 kDa protein (292 aa).

The protein belongs to the adenoviridae E4 30 to 34 kDa protein family. As to quaternary structure, interacts with E1B-55k.

Its subcellular location is the host nucleus. It localises to the host cytoplasm. Its function is as follows. Plays a major role to prevent cellular inhibition of viral genome replication by nuclear bodies. Assembles an SCF-like E3 ubiquitin ligase complex based on the cellular proteins ELOB, ELOC, CUL5 and RBX1, in cooperation with viral E1B-55K. This viral RING-type ligase ubiquitinates cellular substrates prior to proteasomal degradation: p53/TP53, LIG4, MRE11-RAD50-NBS1 (MRN) complex, ITGA3, DAXX and BLM. The polypeptide is Early E4 34 kDa protein (Human adenovirus D serotype 9 (HAdV-9)).